Here is a 207-residue protein sequence, read N- to C-terminus: ATP synthase subunit b 2 (207 aa).

Low complexity predominate over residues 1 to 31; that stretch reads MVAQAAPPAGTAGQGTHEAASAAHGAAAAHG. A disordered region spans residues 1–41; it reads MVAQAAPPAGTAGQGTHEAASAAHGAAAAHGAAEEGHGKKS. Residues 48 to 70 traverse the membrane as a helical segment; the sequence is ATTFASQLLWLVLSFGLLYLLMS.

Belongs to the ATPase B chain family. F-type ATPases have 2 components, F(1) - the catalytic core - and F(0) - the membrane proton channel. F(1) has five subunits: alpha(3), beta(3), gamma(1), delta(1), epsilon(1). F(0) has three main subunits: a(1), b(2) and c(10-14). The alpha and beta chains form an alternating ring which encloses part of the gamma chain. F(1) is attached to F(0) by a central stalk formed by the gamma and epsilon chains, while a peripheral stalk is formed by the delta and b chains.

The protein resides in the cell inner membrane. Functionally, f(1)F(0) ATP synthase produces ATP from ADP in the presence of a proton or sodium gradient. F-type ATPases consist of two structural domains, F(1) containing the extramembraneous catalytic core and F(0) containing the membrane proton channel, linked together by a central stalk and a peripheral stalk. During catalysis, ATP synthesis in the catalytic domain of F(1) is coupled via a rotary mechanism of the central stalk subunits to proton translocation. Its function is as follows. Component of the F(0) channel, it forms part of the peripheral stalk, linking F(1) to F(0). The polypeptide is ATP synthase subunit b 2 (Xanthobacter autotrophicus (strain ATCC BAA-1158 / Py2)).